A 174-amino-acid polypeptide reads, in one-letter code: UPF0316 protein lin1888 (174 aa).

The next 3 helical transmembrane spans lie at 4-24 (GIFI…IYTV), 36-56 (LAAL…SLVL), and 62-82 (IANV…GMKI).

This sequence belongs to the UPF0316 family.

The protein resides in the cell membrane. In Listeria innocua serovar 6a (strain ATCC BAA-680 / CLIP 11262), this protein is UPF0316 protein lin1888.